We begin with the raw amino-acid sequence, 407 residues long: Arginine deiminase (407 aa).

Catalysis depends on Cys397, which acts as the Amidino-cysteine intermediate.

This sequence belongs to the arginine deiminase family.

The protein localises to the cytoplasm. The catalysed reaction is L-arginine + H2O = L-citrulline + NH4(+). It participates in amino-acid degradation; L-arginine degradation via ADI pathway; carbamoyl phosphate from L-arginine: step 1/2. The protein is Arginine deiminase of Limosilactobacillus fermentum (strain NBRC 3956 / LMG 18251) (Lactobacillus fermentum).